A 135-amino-acid polypeptide reads, in one-letter code: Large ribosomal subunit protein uL16c (135 aa).

The tract at residues 1–20 is disordered; sequence MLSPKRTRFRKQHRGRMKGK.

Belongs to the universal ribosomal protein uL16 family. As to quaternary structure, part of the 50S ribosomal subunit.

It is found in the plastid. It localises to the chloroplast. The polypeptide is Large ribosomal subunit protein uL16c (Landoltia punctata (Dotted duckmeat)).